Here is a 739-residue protein sequence, read N- to C-terminus: Ent-kaurene synthase-like 3 (739 aa).

Mg(2+) contacts are provided by aspartate 475, aspartate 479, asparagine 619, threonine 623, and glutamate 627. Residues 475–479 (DDFFD) carry the DDXXD motif motif.

Belongs to the terpene synthase family. Mg(2+) is required as a cofactor. In terms of tissue distribution, expressed in roots and stems.

The sequence is that of Ent-kaurene synthase-like 3 (KSL3) from Oryza sativa subsp. japonica (Rice).